Consider the following 275-residue polypeptide: uncharacterized protein (275 aa).

Residues C97, C102, C136, and C140 each coordinate [4Fe-4S] cluster. Position 140 (C140) interacts with siroheme.

Belongs to the nitrite and sulfite reductase 4Fe-4S domain family.

This is an uncharacterized protein from Methanocaldococcus jannaschii (strain ATCC 43067 / DSM 2661 / JAL-1 / JCM 10045 / NBRC 100440) (Methanococcus jannaschii).